The following is a 448-amino-acid chain: Allantoinase (448 aa).

Zn(2+)-binding residues include His60, His62, Lys147, His183, His239, and Asp312. Lys147 is modified (N6-carboxylysine).

This sequence belongs to the metallo-dependent hydrolases superfamily. Allantoinase family. As to quaternary structure, homotetramer. Zn(2+) is required as a cofactor. Carboxylation allows a single lysine to coordinate two zinc ions.

The enzyme catalyses (S)-allantoin + H2O = allantoate + H(+). The protein operates within nitrogen metabolism; (S)-allantoin degradation; allantoate from (S)-allantoin: step 1/1. In terms of biological role, catalyzes the conversion of allantoin (5-ureidohydantoin) to allantoic acid by hydrolytic cleavage of the five-member hydantoin ring. The chain is Allantoinase from Deinococcus radiodurans (strain ATCC 13939 / DSM 20539 / JCM 16871 / CCUG 27074 / LMG 4051 / NBRC 15346 / NCIMB 9279 / VKM B-1422 / R1).